A 1450-amino-acid polypeptide reads, in one-letter code: DNA-directed RNA polymerase III subunit rpc1 (1450 aa).

The Zn(2+) site is built by C67, C70, C77, H80, C107, C110, and C154. D491, D493, and D495 together coordinate Mg(2+). Residues 832–844 are bridging helix; the sequence is PTEFFFHTMGGRE.

The protein belongs to the RNA polymerase beta' chain family. Component of the RNA polymerase III (Pol III) complex consisting of 17 subunits.

The protein resides in the nucleus. The catalysed reaction is RNA(n) + a ribonucleoside 5'-triphosphate = RNA(n+1) + diphosphate. DNA-dependent RNA polymerase catalyzes the transcription of DNA into RNA using the four ribonucleoside triphosphates as substrates. Largest and catalytic core component of RNA polymerase III which synthesizes small RNAs, such as 5S rRNA and tRNAs. Forms the polymerase active center together with the second largest subunit. A single-stranded DNA template strand of the promoter is positioned within the central active site cleft of Pol III. A bridging helix emanates from RPC1 and crosses the cleft near the catalytic site and is thought to promote translocation of Pol III by acting as a ratchet that moves the RNA-DNA hybrid through the active site by switching from straight to bent conformations at each step of nucleotide addition. The protein is DNA-directed RNA polymerase III subunit rpc1 (polr3a) of Dictyostelium discoideum (Social amoeba).